A 507-amino-acid chain; its full sequence is Peroxisomal membrane protein PEX14 (507 aa).

2 stretches are compositionally biased toward polar residues: residues 1–10 and 32–48; these read MATHQQTQPP and EVQQ…SVFK. The tract at residues 1–52 is disordered; that stretch reads MATHQQTQPPSDFPALADENSQIPEATKPANEVQQATIAQDPPTSVFKNSEP. Topologically, residues 1 to 152 are peroxisomal; sequence MATHQQTQPP…QAAFLSRFRW (152 aa). Involved in interaction with PEX5 regions lie at residues 58 to 65 and 78 to 97; these read IQNAIKFL and RRSF…EAFR. The chain crosses the membrane as a helical span at residues 153-173; the sequence is YHAILAVGVLAASGAGTAVFI. Over 174 to 507 the chain is Cytoplasmic; that stretch reads KRSLIPRFKS…EQQHISQEGN (334 aa). Positions 288-302 are enriched in polar residues; that stretch reads VTTARKPYTNGSNVD. 4 disordered regions span residues 288–329, 344–394, 409–435, and 448–507; these read VTTA…PKSY, NIRE…NPRS, ANQN…QPPP, and PKPQ…QEGN. Positions 308–322 are enriched in low complexity; that stretch reads ARSASPPAAPADSSA. Residues 378–394 are compositionally biased toward polar residues; sequence QDESSNGQWWQQKNPRS.

This sequence belongs to the peroxin-14 family. In terms of assembly, interacts with PEX13; forming the PEX13-PEX14 docking complex. Interacts with PEX5 (via WxxxF/Y motifs). As to expression, expressed in flowers, siliques, leaves and roots.

It localises to the peroxisome membrane. Component of the PEX13-PEX14 docking complex, a translocon channel that specifically mediates the import of peroxisomal cargo proteins bound to PEX5 receptor. The PEX13-PEX14 docking complex forms a large import pore which can be opened to a diameter of about 9 nm. Mechanistically, PEX5 receptor along with cargo proteins associates with the PEX14 subunit of the PEX13-PEX14 docking complex in the cytosol, leading to the insertion of the receptor into the organelle membrane with the concomitant translocation of the cargo into the peroxisome matrix. This chain is Peroxisomal membrane protein PEX14, found in Arabidopsis thaliana (Mouse-ear cress).